The chain runs to 172 residues: 3-phenylpropionate/cinnamic acid dioxygenase subunit beta (172 aa).

It belongs to the bacterial ring-hydroxylating dioxygenase beta subunit family. As to quaternary structure, this dioxygenase system consists of four proteins: the two subunits of the hydroxylase component (HcaE and HcaF), a ferredoxin (HcaC) and a ferredoxin reductase (HcaD).

It catalyses the reaction 3-phenylpropanoate + NADH + O2 + H(+) = 3-(cis-5,6-dihydroxycyclohexa-1,3-dien-1-yl)propanoate + NAD(+). The catalysed reaction is (E)-cinnamate + NADH + O2 + H(+) = (2E)-3-(cis-5,6-dihydroxycyclohexa-1,3-dien-1-yl)prop-2-enoate + NAD(+). It functions in the pathway aromatic compound metabolism; 3-phenylpropanoate degradation. Its function is as follows. Part of the multicomponent 3-phenylpropionate dioxygenase. Converts 3-phenylpropionic acid (PP) and cinnamic acid (CI) into 3-phenylpropionate-dihydrodiol (PP-dihydrodiol) and cinnamic acid-dihydrodiol (CI-dihydrodiol), respectively. This Shigella flexneri serotype 5b (strain 8401) protein is 3-phenylpropionate/cinnamic acid dioxygenase subunit beta.